We begin with the raw amino-acid sequence, 248 residues long: Triosephosphate isomerase (248 aa).

Residues Asn-10 and Lys-12 each contribute to the D-glyceraldehyde 3-phosphate site. His-95 serves as the catalytic Electrophile. Glu-165 serves as the catalytic Proton acceptor. Residues Gly-171, Leu-230, and 232–233 (GN) each bind D-glyceraldehyde 3-phosphate.

It belongs to the triosephosphate isomerase family. In terms of assembly, homodimer.

It catalyses the reaction D-glyceraldehyde 3-phosphate = dihydroxyacetone phosphate. It participates in carbohydrate biosynthesis; gluconeogenesis. It functions in the pathway carbohydrate degradation; glycolysis; D-glyceraldehyde 3-phosphate from glycerone phosphate: step 1/1. Catalyzes the interconversion of glyceraldehyde 3-phosphate and dihydroxyacetone phosphate in the glycolytic and gluconeogenic pathways. The polypeptide is Triosephosphate isomerase (Plasmodium falciparum (isolate 3D7)).